Consider the following 344-residue polypeptide: uncharacterized protein (344 aa).

The disordered stretch occupies residues 95–344; the sequence is TINPEDANED…TPAKKNSKGR (250 aa). Positions 103 to 123 are enriched in basic and acidic residues; that stretch reads EDAKVKNSLKLEKEEGSDEKS. Over residues 135–155 the composition is skewed to acidic residues; sequence SDDESDNSNDSEESEAEDSDQ. A compositionally biased stretch (low complexity) spans 191-200; the sequence is SAKNAKASKP. Positions 244–259 are enriched in acidic residues; the sequence is SEDEDSGSDNSEEESE. Residues 265-276 show a composition bias toward basic residues; that stretch reads ASSKKPPSKSSK. Acidic residues predominate over residues 281–314; sequence EDEDEDSGQSESEHSEEESNSDEDSGQSEEESEE. The segment covering 331 to 344 has biased composition (basic residues); that stretch reads TAKKTPAKKNSKGR.

This is an uncharacterized protein from Acanthamoeba polyphaga (Amoeba).